Reading from the N-terminus, the 229-residue chain is ATP-dependent dethiobiotin synthetase BioD (229 aa).

Glycine 12–valine 17 contributes to the ATP binding site. Residue threonine 16 coordinates Mg(2+). Residue lysine 37 is part of the active site. Residue threonine 41 coordinates substrate. ATP is bound by residues aspartate 53, glutamate 112–glycine 115, and proline 201–glycine 203. Mg(2+)-binding residues include aspartate 53 and glutamate 112.

It belongs to the dethiobiotin synthetase family. Homodimer. The cofactor is Mg(2+).

The protein resides in the cytoplasm. The enzyme catalyses (7R,8S)-7,8-diammoniononanoate + CO2 + ATP = (4R,5S)-dethiobiotin + ADP + phosphate + 3 H(+). The protein operates within cofactor biosynthesis; biotin biosynthesis; biotin from 7,8-diaminononanoate: step 1/2. In terms of biological role, catalyzes a mechanistically unusual reaction, the ATP-dependent insertion of CO2 between the N7 and N8 nitrogen atoms of 7,8-diaminopelargonic acid (DAPA, also called 7,8-diammoniononanoate) to form a ureido ring. The protein is ATP-dependent dethiobiotin synthetase BioD of Mycobacterium sp. (strain KMS).